The sequence spans 402 residues: MSRRLFTSESVTEGHPDKIADQISDTILDALLREDPTSRVAVETLITTGLVHVAGEVTTKAYADIPNLVRNKVLEIGYDSSKKGFDGASCGVSVSIGAQSPDIAQGVDTAYEKRVEGDEDELDKQGAGDQGLMFGYACDETPELMPLPIHVAHRLSRRLSEVRKNGTIPYLRPDGKTQVTIEYDGDKAVRLDTVVVSSQHASDIDLDSLLAPDIREFVVEHVLAQLVEDGIKLDTEGYRLLVNPTGRFEIGGPMGDAGLTGRKIIIDTYGGMARHGGGAFSGKDPSKVDRSAAYAMRWVAKNVVAAGLAARCEVQVAYAIGKAEPVGLFVETFGTAAVDTEKIENAIGEVFDLRPAAIIRDLDLLRPIYAQTAAYGHFGRELPDFTWERTDRVDALRAAAGL.

An ATP-binding site is contributed by His15. Asp17 lines the Mg(2+) pocket. Glu43 contributes to the K(+) binding site. Residues Glu56 and Gln99 each coordinate L-methionine. Residues 99–109 form a flexible loop region; it reads QSPDIAQGVDT. ATP contacts are provided by residues 174–176, 247–248, Asp256, 262–263, Ala279, and Lys283; these read DGK, RF, and RK. Asp256 contacts L-methionine. Lys287 contacts L-methionine.

This sequence belongs to the AdoMet synthase family. In terms of assembly, homotetramer; dimer of dimers. It depends on Mg(2+) as a cofactor. The cofactor is K(+).

Its subcellular location is the cytoplasm. The enzyme catalyses L-methionine + ATP + H2O = S-adenosyl-L-methionine + phosphate + diphosphate. The protein operates within amino-acid biosynthesis; S-adenosyl-L-methionine biosynthesis; S-adenosyl-L-methionine from L-methionine: step 1/1. Functionally, catalyzes the formation of S-adenosylmethionine (AdoMet) from methionine and ATP. The overall synthetic reaction is composed of two sequential steps, AdoMet formation and the subsequent tripolyphosphate hydrolysis which occurs prior to release of AdoMet from the enzyme. This Streptomyces griseus subsp. griseus (strain JCM 4626 / CBS 651.72 / NBRC 13350 / KCC S-0626 / ISP 5235) protein is S-adenosylmethionine synthase.